The following is a 368-amino-acid chain: Outer membrane protein assembly factor BamC (368 aa).

An N-terminal signal peptide occupies residues Met1–Ala18. Cys19 carries N-palmitoyl cysteine lipidation. Residue Cys19 is the site of S-diacylglycerol cysteine attachment.

This sequence belongs to the BamC family. In terms of assembly, part of the Bam complex.

It localises to the cell outer membrane. Part of the outer membrane protein assembly complex, which is involved in assembly and insertion of beta-barrel proteins into the outer membrane. The protein is Outer membrane protein assembly factor BamC of Pseudoalteromonas atlantica (strain T6c / ATCC BAA-1087).